Here is a 504-residue protein sequence, read N- to C-terminus: ATP synthase subunit alpha (504 aa).

Residue 169 to 176 (GDRQTGKT) coordinates ATP.

Belongs to the ATPase alpha/beta chains family. As to quaternary structure, F-type ATPases have 2 components, CF(1) - the catalytic core - and CF(0) - the membrane proton channel. CF(1) has five subunits: alpha(3), beta(3), gamma(1), delta(1), epsilon(1). CF(0) has three main subunits: a(1), b(2) and c(9-12). The alpha and beta chains form an alternating ring which encloses part of the gamma chain. CF(1) is attached to CF(0) by a central stalk formed by the gamma and epsilon chains, while a peripheral stalk is formed by the delta and b chains.

It is found in the cell membrane. It carries out the reaction ATP + H2O + 4 H(+)(in) = ADP + phosphate + 5 H(+)(out). In terms of biological role, produces ATP from ADP in the presence of a proton gradient across the membrane. The alpha chain is a regulatory subunit. The polypeptide is ATP synthase subunit alpha (Clostridium kluyveri (strain ATCC 8527 / DSM 555 / NBRC 12016 / NCIMB 10680 / K1)).